The chain runs to 309 residues: Homoserine kinase (309 aa).

88–98 (PLARGLGSSAA) lines the ATP pocket.

It belongs to the GHMP kinase family. Homoserine kinase subfamily.

Its subcellular location is the cytoplasm. It catalyses the reaction L-homoserine + ATP = O-phospho-L-homoserine + ADP + H(+). It functions in the pathway amino-acid biosynthesis; L-threonine biosynthesis; L-threonine from L-aspartate: step 4/5. Functionally, catalyzes the ATP-dependent phosphorylation of L-homoserine to L-homoserine phosphate. The polypeptide is Homoserine kinase (Halalkalibacterium halodurans (strain ATCC BAA-125 / DSM 18197 / FERM 7344 / JCM 9153 / C-125) (Bacillus halodurans)).